The chain runs to 366 residues: Alanine racemase (366 aa).

The active-site Proton acceptor; specific for D-alanine is the Lys35. Lys35 bears the N6-(pyridoxal phosphate)lysine mark. Arg130 serves as a coordination point for substrate. Tyr254 acts as the Proton acceptor; specific for L-alanine in catalysis. Met302 contacts substrate.

Belongs to the alanine racemase family. It depends on pyridoxal 5'-phosphate as a cofactor.

The enzyme catalyses L-alanine = D-alanine. It functions in the pathway amino-acid biosynthesis; D-alanine biosynthesis; D-alanine from L-alanine: step 1/1. Functionally, catalyzes the interconversion of L-alanine and D-alanine. May also act on other amino acids. The protein is Alanine racemase (alr) of Variovorax paradoxus (strain S110).